The sequence spans 365 residues: MFEINPIKNRLQDVSERTNILRGYLDYDAKKERLEEVNAELEQPDVWNEPERAQALGKERASLEAVVETIDLLDQGVEDVDGLLELAVEEEDQETFDEIEPELAELEAKLAKLEFRRMFSGDHDASDCYIDLQSGSGGTEAQDWTSMMLRMYLRWAEAKGFKVEVIEVSEGEVAGLKGATVRIAGEYAYGWLRTETGVHRLVRKSPFDSSGRRHTSFASAFIYPEIDDNIQIDINPSDLRIDVYRASGAGGQHVNTTESAVRITHVPTNIVVQCQNDRSQHKNKDQAMKQLRAKLFEYELQKQNAEKQANEDAKSDIGWGSQIRSYVLDDSRIKDLRTGIENRNTQAVLDGDLDKFIEASLKSGL.

Gln-252 is subject to N5-methylglutamine.

Belongs to the prokaryotic/mitochondrial release factor family. Post-translationally, methylated by PrmC. Methylation increases the termination efficiency of RF2.

It localises to the cytoplasm. In terms of biological role, peptide chain release factor 2 directs the termination of translation in response to the peptide chain termination codons UGA and UAA. This is Peptide chain release factor 2 from Aliivibrio fischeri (strain ATCC 700601 / ES114) (Vibrio fischeri).